Here is a 745-residue protein sequence, read N- to C-terminus: 5-methyltetrahydropteroyltriglutamate--homocysteine methyltransferase (745 aa).

5-methyltetrahydropteroyltri-L-glutamate is bound by residues 16–19 (REWK) and Lys110. Residues 420 to 422 (IGS) and Glu473 each bind L-homocysteine. Residues 420 to 422 (IGS) and Glu473 contribute to the L-methionine site. Trp550 serves as a coordination point for 5-methyltetrahydropteroyltri-L-glutamate. Position 588 (Asp588) interacts with L-homocysteine. Asp588 lines the L-methionine pocket. Glu594 contacts 5-methyltetrahydropteroyltri-L-glutamate. Zn(2+)-binding residues include His630, Cys632, and Glu654. His683 (proton donor) is an active-site residue. Cys715 is a Zn(2+) binding site.

It belongs to the vitamin-B12 independent methionine synthase family. The cofactor is Zn(2+).

It carries out the reaction 5-methyltetrahydropteroyltri-L-glutamate + L-homocysteine = tetrahydropteroyltri-L-glutamate + L-methionine. It participates in amino-acid biosynthesis; L-methionine biosynthesis via de novo pathway; L-methionine from L-homocysteine (MetE route): step 1/1. Catalyzes the transfer of a methyl group from 5-methyltetrahydrofolate to homocysteine resulting in methionine formation. This is 5-methyltetrahydropteroyltriglutamate--homocysteine methyltransferase from Streptococcus agalactiae serotype III (strain NEM316).